A 624-amino-acid chain; its full sequence is DNA-directed RNA polymerase III subunit rpc-3 (624 aa).

Disordered regions lie at residues K229–L260 and L373–S418. The segment covering D385–M403 has biased composition (acidic residues). The tract at residues C551–V572 is leucine-zipper.

It belongs to the RNA polymerase beta chain family. Component of the RNA polymerase III (Pol III) complex consisting of 17 subunits.

The protein localises to the nucleus. DNA-dependent RNA polymerase catalyzes the transcription of DNA into RNA using the four ribonucleoside triphosphates as substrates. Specific core component of RNA polymerase III which synthesizes small RNAs, such as 5S rRNA and tRNAs. This is DNA-directed RNA polymerase III subunit rpc-3 (rpc-82) from Neurospora crassa (strain ATCC 24698 / 74-OR23-1A / CBS 708.71 / DSM 1257 / FGSC 987).